The sequence spans 380 residues: Ankyrin repeat domain-containing protein 63 (380 aa).

5 ANK repeats span residues 11-40 (AGTR…RSII), 46-79 (QGRT…AVNL), 83-112 (RGRT…DPEA), 116-145 (AGNS…RLGL), and 153-182 (AGLT…RAAA). 2 stretches are compositionally biased toward low complexity: residues 181–203 (AAAA…PAAS) and 216–226 (RPLLARFARAA). Residues 181–256 (AAAAAARGSN…GSERPELGRS (76 aa)) are disordered. The residue at position 193 (S193) is a Phosphoserine. Residue S294 is modified to Phosphoserine. The interval 309–368 (PIGLSPHPEGGPGSGRLGLRRRSTAPDIPSLVGEAPGPESGPELEANALSVSVPGPNPWQ) is disordered.

The chain is Ankyrin repeat domain-containing protein 63 from Homo sapiens (Human).